Consider the following 155-residue polypeptide: Endoribonuclease YbeY (155 aa).

His-114, His-118, and His-124 together coordinate Zn(2+).

This sequence belongs to the endoribonuclease YbeY family. The cofactor is Zn(2+).

The protein resides in the cytoplasm. Single strand-specific metallo-endoribonuclease involved in late-stage 70S ribosome quality control and in maturation of the 3' terminus of the 16S rRNA. In Tolumonas auensis (strain DSM 9187 / NBRC 110442 / TA 4), this protein is Endoribonuclease YbeY.